We begin with the raw amino-acid sequence, 330 residues long: Mucin-15 (330 aa).

Residues 1–23 (MLTSAKILLISILSSLLLFGSHG) form the signal peptide. The tract at residues 23–115 (GEEGQKTNTT…SPRSPSTHSF (93 aa)) is disordered. Topologically, residues 24–232 (EEGQKTNTTE…SDPQEENRNT (209 aa)) are extracellular. N30, N44, N54, N71, N79, N89, N94, N122, N138, N147, N154, N162, N175, N214, and N221 each carry an N-linked (GlcNAc...) asparagine glycan. Residues 42–56 (MENQSVPLESKANLT) show a composition bias toward polar residues. The segment covering 86 to 115 (FYSNLSTDNSSRSPSLMPTLSPRSPSTHSF) has biased composition (polar residues). Positions 164-185 (SITVSNLPSGPNTTSVTPMVTE) are disordered. The chain crosses the membrane as a helical span at residues 233-253 (GVVFGAILGAILGASLLSLVG). The Cytoplasmic portion of the chain corresponds to 254–330 (YLLCGKRKTD…DDIPPLRTSV (77 aa)). Residues 279-330 (LRLDNAPEPYDMSFGNSSYYNPTANDSSTSAGGENAHDSIPMDDIPPLRTSV) form a disordered region. A compositionally biased stretch (polar residues) spans 292–310 (FGNSSYYNPTANDSSTSAG).

Post-translationally, highly glycosylated (N- and O-linked carbohydrates). As to expression, mainly expressed on apical surfaces of the mammary epithelial cells.

Its subcellular location is the cell membrane. It localises to the secreted. The polypeptide is Mucin-15 (MUC15) (Bos taurus (Bovine)).